The sequence spans 92 residues: Serine protease inhibitor I/II (92 aa).

A signal peptide spans 1–19 (MKLALALCAAFLLVVLVQA). Pacifastin domains follow at residues 20-54 (EQEC…CPPH) and 57-92 (EVTC…CPQK). Intrachain disulfides connect Cys-23-Cys-38, Cys-33-Cys-51, Cys-36-Cys-46, Cys-60-Cys-75, Cys-70-Cys-89, and Cys-73-Cys-84.

It belongs to the protease inhibitor I19 family. In terms of tissue distribution, expressed in hemolymph, ovaries, testes and fat body of adults but are absent in the gut. Also present in larval hemolymph and fat body.

It is found in the secreted. Its function is as follows. In vitro, is active against alpha-chymotrypsin and trypsin. Functionally, in vitro, is active against alpha-chymotrypsin and pancreatic elastase. This chain is Serine protease inhibitor I/II, found in Schistocerca gregaria (Desert locust).